We begin with the raw amino-acid sequence, 287 residues long: Co-chaperone protein DjlA (287 aa).

Residues Met1 to Lys6 are Periplasmic-facing. The helical transmembrane segment at Phe7 to His30 threads the bilayer. The Cytoplasmic segment spans residues Leu31–Lys287. The 67-residue stretch at Asp221 to Lys287 folds into the J domain.

In terms of assembly, homodimer.

The protein resides in the cell inner membrane. In terms of biological role, regulatory DnaK co-chaperone. Direct interaction between DnaK and DjlA is needed for the induction of the wcaABCDE operon, involved in the synthesis of a colanic acid polysaccharide capsule, possibly through activation of the RcsB/RcsC phosphotransfer signaling pathway. The colanic acid capsule may help the bacterium survive conditions outside the host. The protein is Co-chaperone protein DjlA of Pasteurella multocida (strain Pm70).